Here is a 418-residue protein sequence, read N- to C-terminus: Sonic hedgehog protein (418 aa).

The N-terminal stretch at 1–23 (MRLLTRVLLVSLLTLSLVVSGLA) is a signal peptide. A lipid anchor (N-palmitoyl cysteine) is attached at Cys24. The Cardin-Weintraub signature appears at 32-38 (RRRHPKK). Ca(2+)-binding residues include Glu89, Glu90, Asp95, Thr125, Glu126, Asp129, and Asp131. His140, Asp147, and His182 together coordinate Zn(2+). The Cholesterol glycine ester moiety is linked to residue Gly197.

Belongs to the hedgehog family. Interacts with HHATL/GUP1 which negatively regulates HHAT-mediated palmitoylation of the SHH N-terminus. Interacts with BOC and CDON. Interacts with HHIP. Interacts with DISP1 via its cholesterol anchor. Interacts with SCUBE2. As to quaternary structure, multimer. The C-terminal domain displays an autoproteolysis activity and a cholesterol transferase activity. Both activities result in the cleavage of the full-length protein and covalent attachment of a cholesterol moiety to the C-terminal of the newly generated N-terminal fragment (ShhN). Cholesterylation is required for the sonic hedgehog protein N-product targeting to lipid rafts and multimerization. ShhN is the active species in both local and long-range signaling, whereas the C-product (ShhC) is degraded in the reticulum endoplasmic. Post-translationally, N-palmitoylation by HHAT of ShhN is required for sonic hedgehog protein N-product multimerization and full activity. It is a prerequisite for the membrane-proximal positioning and the subsequent shedding of this N-terminal peptide. In terms of processing, the lipidated N- and C-terminal peptides of ShhNp can be cleaved (shedding). The N-terminal palmitoylated peptide is cleaved at the Cardin-Weintraub (CW) motif site. The cleavage reduced the interactions with heparan sulfate. The cleavage is enhanced by SCUBE2. As to expression, expressed in the ventral midline of the neural tube and brain. Also found in the notochord and in developing fin bud. In the developing brain, expression occurs in domains that include a discrete region in the floor of the diencephalon.

The protein localises to the endoplasmic reticulum membrane. It is found in the golgi apparatus membrane. Its subcellular location is the cell membrane. The catalysed reaction is glycyl-L-cysteinyl-[protein] + cholesterol + H(+) = [protein]-C-terminal glycyl cholesterol ester + N-terminal L-cysteinyl-[protein]. Its function is as follows. The C-terminal part of the sonic hedgehog protein precursor displays an autoproteolysis and a cholesterol transferase activity. Both activities result in the cleavage of the full-length protein into two parts (ShhN and ShhC) followed by the covalent attachment of a cholesterol moiety to the C-terminal of the newly generated ShhN. Both activities occur in the endoplasmic reticulum. Once cleaved, ShhC is degraded in the endoplasmic reticulum. Functionally, the dually lipidated sonic hedgehog protein N-product (ShhNp) is a morphogen which is essential for a variety of patterning events during development. Involved in dorso-ventral patterning of the brain and in early patterning of the developing eyes. Binds to the patched (PTCH1) receptor, which functions in association with smoothened (SMO), to activate the transcription of target genes. In the absence of SHH, PTCH1 represses the constitutive signaling activity of SMO. The sequence is that of Sonic hedgehog protein (shha) from Danio rerio (Zebrafish).